A 121-amino-acid polypeptide reads, in one-letter code: Cell division protein FtsB (121 aa).

At 1–6 (MRNWRW) the chain is on the cytoplasmic side. A helical membrane pass occupies residues 7–24 (LLLVLAVLLAWLQYRFWF). Residues 25-121 (GPGNSGEVMM…PEPIDPVDHP (97 aa)) are Periplasmic-facing. Residues 31–66 (EVMMLEAQVAHQTQDNEGLRQRNQALAAEVKDLKDG) are a coiled coil. The tract at residues 92 to 121 (EDAPLPAPASPEAPAPPQQAPEPIDPVDHP) is disordered. Residues 96-115 (LPAPASPEAPAPPQQAPEPI) show a composition bias toward pro residues.

This sequence belongs to the FtsB family. Part of a complex composed of FtsB, FtsL and FtsQ.

It is found in the cell inner membrane. Essential cell division protein. May link together the upstream cell division proteins, which are predominantly cytoplasmic, with the downstream cell division proteins, which are predominantly periplasmic. The sequence is that of Cell division protein FtsB from Xanthomonas euvesicatoria pv. vesicatoria (strain 85-10) (Xanthomonas campestris pv. vesicatoria).